Here is a 312-residue protein sequence, read N- to C-terminus: Coproporphyrin III ferrochelatase (312 aa).

Residues tyrosine 13, arginine 30, 46-47 (RY), serine 54, and tyrosine 125 each bind Fe-coproporphyrin III. 2 residues coordinate Fe(2+): histidine 183 and glutamate 264.

It belongs to the ferrochelatase family.

The protein localises to the cytoplasm. It carries out the reaction Fe-coproporphyrin III + 2 H(+) = coproporphyrin III + Fe(2+). The protein operates within porphyrin-containing compound metabolism; protoheme biosynthesis. In terms of biological role, involved in coproporphyrin-dependent heme b biosynthesis. Catalyzes the insertion of ferrous iron into coproporphyrin III to form Fe-coproporphyrin III. In Bacillus pumilus (strain SAFR-032), this protein is Coproporphyrin III ferrochelatase.